A 277-amino-acid chain; its full sequence is Uridine-cytidine kinase 1 (277 aa).

The segment covering 1–10 (MASAGGGDCE) has biased composition (gly residues). Residues 1-29 (MASAGGGDCEGAGPEADRPHQRPFLIGVS) form a disordered region. 30–38 (GGTASGKST) lines the ATP pocket. Residues Asp-87, Tyr-115, His-120, Arg-169, Arg-178, and Gln-186 each coordinate substrate. Asp-215 is a binding site for ATP. The segment at 246-277 (RSHKRTFPEPGEHPAVLASGKRSHLESSSRPH) is disordered. Thr-251 is subject to Phosphothreonine. Residues 268-277 (SHLESSSRPH) show a composition bias toward basic and acidic residues.

Belongs to the uridine kinase family.

It catalyses the reaction uridine + ATP = UMP + ADP + H(+). It carries out the reaction cytidine + ATP = CMP + ADP + H(+). The protein operates within pyrimidine metabolism; CTP biosynthesis via salvage pathway; CTP from cytidine: step 1/3. It participates in pyrimidine metabolism; UMP biosynthesis via salvage pathway; UMP from uridine: step 1/1. In terms of biological role, phosphorylates uridine and cytidine to uridine monophosphate and cytidine monophosphate. Does not phosphorylate deoxyribonucleosides or purine ribonucleosides. Can use ATP or GTP as a phosphate donor. The chain is Uridine-cytidine kinase 1 (UCK1) from Bos taurus (Bovine).